The primary structure comprises 407 residues: Lymphocyte transmembrane adapter 1 (407 aa).

The disordered stretch occupies residues 1 to 25; the sequence is MYSTPAPPEVTRRNSEPSTRQGTLG. Over 1–33 the chain is Extracellular; the sequence is MYSTPAPPEVTRRNSEPSTRQGTLGSLQGEKGQ. Over residues 16–25 the composition is skewed to polar residues; the sequence is EPSTRQGTLG. Residues 34–54 form a helical; Signal-anchor for type III membrane protein membrane-spanning segment; it reads IIFPGFVVLLTIILVIIAACI. The Cytoplasmic segment spans residues 55 to 407; that stretch reads LWSWKKQKKR…LATETSDEDA (353 aa). The disordered stretch occupies residues 109 to 131; the sequence is ESLLSRASDSPEPEAPQANGSLQ. Phosphotyrosine is present on residues tyrosine 185, tyrosine 260, tyrosine 286, and tyrosine 353. Residues 331–388 are disordered; it reads SAQSEDSAMVHREEQSSEDSSDYETVLVAELEGRDWKQGPGTQHPSDEGTPGDLAGKL.

As to quaternary structure, when phosphorylated, interacts with GRB2, PIK3R1 and GRAP2. Phosphorylated on tyrosines upon TCR or BCR activation; which leads to the recruitment of GRB2, PIK3R1 and GRAP2. As to expression, expressed in T-cells and B-cells.

The protein localises to the cell membrane. Negatively regulates TCR (T-cell antigen receptor)-mediated signaling in T-cells and BCR (B-cell antigen receptor)-mediated signaling in B-cells. In Mus musculus (Mouse), this protein is Lymphocyte transmembrane adapter 1 (Lax1).